Here is a 227-residue protein sequence, read N- to C-terminus: tRNA (guanine-N(7)-)-methyltransferase (227 aa).

Residues glutamate 57, glutamate 82, aspartate 109, and aspartate 132 each coordinate S-adenosyl-L-methionine. Aspartate 132 is a catalytic residue. Substrate-binding positions include lysine 136, aspartate 168, and 205–208; that span reads TKFE.

This sequence belongs to the class I-like SAM-binding methyltransferase superfamily. TrmB family.

It catalyses the reaction guanosine(46) in tRNA + S-adenosyl-L-methionine = N(7)-methylguanosine(46) in tRNA + S-adenosyl-L-homocysteine. Its pathway is tRNA modification; N(7)-methylguanine-tRNA biosynthesis. In terms of biological role, catalyzes the formation of N(7)-methylguanine at position 46 (m7G46) in tRNA. The chain is tRNA (guanine-N(7)-)-methyltransferase from Leifsonia xyli subsp. xyli (strain CTCB07).